The chain runs to 474 residues: Myocyte-specific enhancer factor 2C (474 aa).

Residues 3–57 (RKKIQITRIMDERNRQVTFTKRKFGLMKKAYELSVLCDCEIALIIFNSTNKLFQY) form the MADS-box domain. Lys4 is subject to N6-acetyllysine. A DNA-binding region (mef2-type) is located at residues 58-86 (ASTDMDKVLLKYTEYNEPHESRTNSDIVE). Ser59 carries the post-translational modification Phosphoserine; by CK2. Residues 91-118 (KGLNGCDSPDPDADDSVGHSPESEDKYR) are disordered. Phosphoserine is present on residues Ser98 and Ser106. Residue Gly108 is modified to Phosphothreonine. Ser110 bears the Phosphoserine mark. N6-acetyllysine is present on residues Lys116 and Lys119. 2 positions are modified to phosphoserine: Ser222 and Ser228. An N6-acetyllysine mark is found at Lys234 and Lys239. At Ser240 the chain carries Phosphoserine. An N6-acetyllysine mark is found at Lys252 and Lys264. Residues 271–278 (SEDVDLLL) form a beta domain region. Phosphothreonine; by MAPK14 occurs at positions 293 and 300. The transcription repressor stretch occupies residues 368 to 399 (ACTSTHLSQSSNLSLPSTQSLSIKSEPVSPPR). The span at 375–390 (SQSSNLSLPSTQSLSI) shows a compositional bias: polar residues. Residues 375–474 (SQSSNLSLPS…RMRLSEGWAT (100 aa)) form a disordered region. Residue Lys391 forms a Glycyl lysine isopeptide (Lys-Gly) (interchain with G-Cter in SUMO) linkage. Ser396 is subject to Phosphoserine; by CDK5. At Ser420 the chain carries Phosphoserine; by MAPK7. Over residues 420–433 (SPVDSLSSCSSSYD) the composition is skewed to low complexity. Over residues 434–444 (GSDREDHRNEF) the composition is skewed to basic and acidic residues. At Ser446 the chain carries Phosphoserine.

Belongs to the MEF2 family. Forms a complex with class II HDACs in undifferentiating cells. On myogenic differentiation, HDACs are released into the cytoplasm allowing MEF2s to interact with other proteins for activation. Interacts with EP300 in differentiating cells; the interaction acetylates MEF2C leading to increased DNA binding and activation. Interacts with HDAC7 and CARM1. Interacts with HDAC4, HDAC7 AND HDAC9; the interaction with HDACs represses transcriptional activity. Interacts with LPIN1. Interacts with MYOCD. Interacts with AKAP13. Interacts with FOXK1; the interaction inhibits MEF2C transactivation activity. Interacts (via N-terminus) with HABP4; this interaction decreases DNA-binding activity of MEF2C in myocardial cells in response to mechanical stress. Interacts with JPH2; interaction specifically takes place with the Junctophilin-2 N-terminal fragment cleavage product of JPH2. Interacts (via MADS box) with SOX18. Interacts with PHF7; the interaction promotes MEF2C binding to its transcription targets. Post-translationally, phosphorylation on Ser-59 enhances DNA binding activity. Phosphorylation on Ser-396 is required for Lys-391 sumoylation and inhibits transcriptional activity. In terms of processing, acetylated by p300 on several sites in diffentiating myocytes. Acetylation on Lys-4 increases DNA binding and transactivation. Sumoylated on Lys-391 with SUMO2 but not by SUMO1 represses transcriptional activity. Post-translationally, proteolytically cleaved in cerebellar granule neurons, probably by caspase 7, following neurotoxicity. Preferentially cleaves the CDK5-mediated hyperphosphorylated form which leads to neuron apoptosis and transcriptional inactivation. In terms of tissue distribution, widely expressed though mainly restricted to skeletal and cardiac muscle, brain, neurons and lymphocytes. Beta domain-lacking isoforms are the most predominantly expressed in all tissues including skeletal and cardiac muscle and brain. Only brain expresses all isoforms. Expression occurs primarily in the internal granule cell layer of the olfactory bulb, cortex, thalamus, hippocampus and cerebellum. Low levels in the cerebellum and hindbrain. Expressed throughout the cortex, including the frontal and entorhinal cortex, dentate gyrus, and basolateral amygdala. Selectively expressed in B-cells but not in T-cells, and its expression increases as B-cells mature.

It localises to the nucleus. Its subcellular location is the cytoplasm. It is found in the sarcoplasm. Functionally, transcription activator which binds specifically to the MEF2 element present in the regulatory regions of many muscle-specific genes. Controls cardiac morphogenesis and myogenesis, and is also involved in vascular development. Enhances transcriptional activation mediated by SOX18. May also be involved in neurogenesis and in the development of cortical architecture. Isoforms that lack the repressor domain are more active than isoform 1. Plays an essential role in hippocampal-dependent learning and memory by suppressing the number of excitatory synapses and thus regulating basal and evoked synaptic transmission. Crucial for normal neuronal development, distribution, and electrical activity in the neocortex. Necessary for proper development of megakaryocytes and platelets and for bone marrow B-lymphopoiesis. Required for B-cell survival and proliferation in response to BCR stimulation, efficient IgG1 antibody responses to T-cell-dependent antigens and for normal induction of germinal center B-cells. The polypeptide is Myocyte-specific enhancer factor 2C (Mus musculus (Mouse)).